The chain runs to 784 residues: Cation/H(+) antiporter 26 (784 aa).

Helical transmembrane passes span 38-58 (PLLL…QALL), 61-81 (LANV…PSAL), 97-117 (YFII…ISTA), 130-150 (LAII…AIAC), 201-221 (LALS…LLLI), 240-260 (FTKV…FNWI), 286-306 (TFLS…LGLV), 321-341 (IGSF…GNKV), 351-371 (IISL…SIVL), 376-396 (FQVP…QGIY), and 413-433 (EAFG…TAIV).

The protein belongs to the monovalent cation:proton antiporter 2 (CPA2) transporter (TC 2.A.37) family. CHX (TC 2.A.37.4) subfamily. In terms of tissue distribution, expressed in pollen.

It is found in the membrane. In terms of biological role, may operate as a cation/H(+) antiporter. In Arabidopsis thaliana (Mouse-ear cress), this protein is Cation/H(+) antiporter 26 (CHX26).